The following is a 709-amino-acid chain: Phosphomethylpyrimidine synthase (709 aa).

Over residues 1-13 (MNIRSNPDTTLPA) the composition is skewed to polar residues. Disordered regions lie at residues 1-21 (MNIR…PLPS) and 125-168 (DAPA…GREQ). Substrate is bound by residues asparagine 274, methionine 303, tyrosine 332, histidine 368, 388–390 (SRG), 429–432 (DGLR), and glutamate 468. Histidine 472 contributes to the Zn(2+) binding site. Position 495 (tyrosine 495) interacts with substrate. Residue histidine 536 participates in Zn(2+) binding. Residues cysteine 616, cysteine 619, and cysteine 624 each contribute to the [4Fe-4S] cluster site.

The protein belongs to the ThiC family. In terms of assembly, homodimer. Requires [4Fe-4S] cluster as cofactor.

It catalyses the reaction 5-amino-1-(5-phospho-beta-D-ribosyl)imidazole + S-adenosyl-L-methionine = 4-amino-2-methyl-5-(phosphooxymethyl)pyrimidine + CO + 5'-deoxyadenosine + formate + L-methionine + 3 H(+). The protein operates within cofactor biosynthesis; thiamine diphosphate biosynthesis. Its function is as follows. Catalyzes the synthesis of the hydroxymethylpyrimidine phosphate (HMP-P) moiety of thiamine from aminoimidazole ribotide (AIR) in a radical S-adenosyl-L-methionine (SAM)-dependent reaction. This chain is Phosphomethylpyrimidine synthase, found in Rhodopseudomonas palustris (strain BisB18).